The sequence spans 201 residues: Translation initiation factor IF-3 (201 aa).

The interval 167–201 is disordered; the sequence is PHRGAKTRARARHPGEPAGGPPPKPTAGDSKAAPN. Positions 169–178 are enriched in basic residues; it reads RGAKTRARAR.

It belongs to the IF-3 family. In terms of assembly, monomer.

The protein resides in the cytoplasm. Its function is as follows. IF-3 binds to the 30S ribosomal subunit and shifts the equilibrium between 70S ribosomes and their 50S and 30S subunits in favor of the free subunits, thus enhancing the availability of 30S subunits on which protein synthesis initiation begins. The chain is Translation initiation factor IF-3 from Mycobacterium bovis (strain ATCC BAA-935 / AF2122/97).